A 318-amino-acid chain; its full sequence is MEKCTFNLPDVQASKPSIAINLTRVGVTNMKKLVEIKRKDKRPIVLISTFDVFVDLPSDRKGANLSRNFEAVDEVLEKVLSTPVYEIEQLCSDIAHNLLGRHEYANQAEVRMKSEYMIRRASPSTGIKCQEVVNIFAEASAVRGNGDRDYFDVKKLIGAEVVGMTACPCAQEIMRDKAATELANLGVERDKIIKFLEKVPMATHNQRGRGIISIKVAHDFDVSLESIIKIIERSMSSSVYEVLKRSDEKVVVETAHMNPKFVEDCVRAMADNVVKEFPNLPDNAVITIKQTNEESIHRHNAFAERVALMGELRKEISQ.

Belongs to the GTP cyclohydrolase IV family. Homodimer. Requires Fe(2+) as cofactor.

It carries out the reaction GTP + H2O = 7,8-dihydroneopterin 2',3'-cyclic phosphate + formate + diphosphate + H(+). Its pathway is cofactor biosynthesis; 5,6,7,8-tetrahydromethanopterin biosynthesis. Its function is as follows. Converts GTP to 7,8-dihydro-D-neopterin 2',3'-cyclic phosphate, the first intermediate in the biosynthesis of coenzyme methanopterin. The polypeptide is GTP cyclohydrolase MptA (Methanosarcina mazei (strain ATCC BAA-159 / DSM 3647 / Goe1 / Go1 / JCM 11833 / OCM 88) (Methanosarcina frisia)).